Consider the following 84-residue polypeptide: Large ribosomal subunit protein bL28 (84 aa).

It belongs to the bacterial ribosomal protein bL28 family.

The sequence is that of Large ribosomal subunit protein bL28 from Clostridium perfringens (strain 13 / Type A).